A 363-amino-acid polypeptide reads, in one-letter code: Aminomethyltransferase (363 aa).

The protein belongs to the GcvT family. In terms of assembly, the glycine cleavage system is composed of four proteins: P, T, L and H.

It carries out the reaction N(6)-[(R)-S(8)-aminomethyldihydrolipoyl]-L-lysyl-[protein] + (6S)-5,6,7,8-tetrahydrofolate = N(6)-[(R)-dihydrolipoyl]-L-lysyl-[protein] + (6R)-5,10-methylene-5,6,7,8-tetrahydrofolate + NH4(+). Its function is as follows. The glycine cleavage system catalyzes the degradation of glycine. This Staphylococcus epidermidis (strain ATCC 35984 / DSM 28319 / BCRC 17069 / CCUG 31568 / BM 3577 / RP62A) protein is Aminomethyltransferase.